The chain runs to 595 residues: NADH-quinone oxidoreductase subunit C/D (595 aa).

Residues Met-1–Gln-186 are NADH dehydrogenase I subunit C. The tract at residues Asp-210–Arg-595 is NADH dehydrogenase I subunit D.

It in the N-terminal section; belongs to the complex I 30 kDa subunit family. This sequence in the C-terminal section; belongs to the complex I 49 kDa subunit family. NDH-1 is composed of 13 different subunits. Subunits NuoB, CD, E, F, and G constitute the peripheral sector of the complex.

It localises to the cell inner membrane. It catalyses the reaction a quinone + NADH + 5 H(+)(in) = a quinol + NAD(+) + 4 H(+)(out). In terms of biological role, NDH-1 shuttles electrons from NADH, via FMN and iron-sulfur (Fe-S) centers, to quinones in the respiratory chain. The immediate electron acceptor for the enzyme in this species is believed to be ubiquinone. Couples the redox reaction to proton translocation (for every two electrons transferred, four hydrogen ions are translocated across the cytoplasmic membrane), and thus conserves the redox energy in a proton gradient. This chain is NADH-quinone oxidoreductase subunit C/D, found in Acinetobacter baumannii (strain AYE).